Here is a 345-residue protein sequence, read N- to C-terminus: tRNA N6-adenosine threonylcarbamoyltransferase (345 aa).

Fe cation is bound by residues H111 and H115. Substrate contacts are provided by residues 134 to 138, D167, G180, and N277; that span reads LVSGG. D305 contacts Fe cation.

The protein belongs to the KAE1 / TsaD family. The cofactor is Fe(2+).

The protein localises to the cytoplasm. It carries out the reaction L-threonylcarbamoyladenylate + adenosine(37) in tRNA = N(6)-L-threonylcarbamoyladenosine(37) in tRNA + AMP + H(+). In terms of biological role, required for the formation of a threonylcarbamoyl group on adenosine at position 37 (t(6)A37) in tRNAs that read codons beginning with adenine. Is involved in the transfer of the threonylcarbamoyl moiety of threonylcarbamoyl-AMP (TC-AMP) to the N6 group of A37, together with TsaE and TsaB. TsaD likely plays a direct catalytic role in this reaction. This Laribacter hongkongensis (strain HLHK9) protein is tRNA N6-adenosine threonylcarbamoyltransferase.